Consider the following 123-residue polypeptide: uncharacterized protein (123 aa).

This is an uncharacterized protein from Autographa californica nuclear polyhedrosis virus (AcMNPV).